The primary structure comprises 466 residues: Alpha-1A adrenergic receptor (466 aa).

The Extracellular segment spans residues 1-27 (MVLLSENASEGSNCTHPPAQVNISKAI). Residues asparagine 7, asparagine 13, and asparagine 22 are each glycosylated (N-linked (GlcNAc...) asparagine). Residues 28–51 (LLGVILGGLIIFGVLGNILVILSV) traverse the membrane as a helical segment. Residues 52–64 (ACHRHLHSVTHYY) are Cytoplasmic-facing. The chain crosses the membrane as a helical span at residues 65 to 88 (IVNLAVADLLLTSTVLPFSAIFEI). The Extracellular segment spans residues 89–99 (LGYWAFGRVFC). A disulfide bridge connects residues cysteine 99 and cysteine 176. Residues 100–122 (NIWAAVDVLCCTASIMGLCIISI) form a helical membrane-spanning segment. At 123 to 143 (DRYIGVSYPLRYPTIVTQRRG) the chain is on the cytoplasmic side. The chain crosses the membrane as a helical span at residues 144 to 167 (VRALLCVWALSLVISIGPLFGWRQ). Residues 168 to 181 (QAPEDETICQINEE) lie on the Extracellular side of the membrane. A helical transmembrane segment spans residues 182–205 (PGYVLFSALGSFYVPLTIILVMYC). Residues 206–273 (RVYVVAKRES…FSREKKAAKT (68 aa)) lie on the Cytoplasmic side of the membrane. Serine 215 carries the phosphoserine; by PKA modification. The chain crosses the membrane as a helical span at residues 274 to 297 (LGIVVGCFVLCWLPFFLVMPIGSF). At 298–305 (FPNFKPPE) the chain is on the extracellular side. The chain crosses the membrane as a helical span at residues 306–329 (TVFKIVFWLGYLNSCINPIIYPCS). Topologically, residues 330–466 (SQEFKKAFQN…ISLGENGEEV (137 aa)) are cytoplasmic. Positions 334-349 (KKAFQNVLRIQCLRRR) match the Nuclear localization signal motif. Cysteine 345 carries the S-palmitoyl cysteine lipid modification.

The protein belongs to the G-protein coupled receptor 1 family. Adrenergic receptor subfamily. ADRA1A sub-subfamily. Homo- and heterooligomer. Heterooligomerizes with ADRA1B homooligomers in cardiac myocytes. Interacts with CAVIN4.

It is found in the nucleus membrane. The protein localises to the cell membrane. It localises to the cytoplasm. The protein resides in the membrane. Its subcellular location is the caveola. This alpha-adrenergic receptor mediates its action by association with G proteins that activate a phosphatidylinositol-calcium second messenger system. Its effect is mediated by G(q) and G(11) proteins. Nuclear ADRA1A-ADRA1B heterooligomers regulate phenylephrine (PE)-stimulated ERK signaling in cardiac myocytes. This Mus musculus (Mouse) protein is Alpha-1A adrenergic receptor (Adra1a).